The following is a 262-amino-acid chain: ClpXP adapter protein SpxH (262 aa).

The protein belongs to the SpxH family. Interacts with Spx.

Its subcellular location is the cytoplasm. In terms of biological role, adapter protein required for efficient degradation of Spx by ClpXP under non-stress conditions. Interaction with Spx stabilizes Spx and exposes the C-terminus of Spx for recognition and proteolysis by ClpXP. In Staphylococcus saprophyticus subsp. saprophyticus (strain ATCC 15305 / DSM 20229 / NCIMB 8711 / NCTC 7292 / S-41), this protein is ClpXP adapter protein SpxH.